The primary structure comprises 106 residues: Small ribosomal subunit protein uS10 (106 aa).

This sequence belongs to the universal ribosomal protein uS10 family. Part of the 30S ribosomal subunit.

Involved in the binding of tRNA to the ribosomes. In Wolbachia pipientis subsp. Culex pipiens (strain wPip), this protein is Small ribosomal subunit protein uS10.